Here is a 339-residue protein sequence, read N- to C-terminus: MKAAVVNEFKKALEIKEVERPKLEEGEVLVKIEACGVCHTDLHAAHGDWPIKPKLPLIPGHEGVGIVVEVAKGVKSIKVGDRVGIPWLYSACGECEYCLTGQETLCPHQLNGGYSVDGGYAEYCKAPADYVAKIPDNLDPVEVAPILCAGVTTYKALKVSGARPGEWVAIYGIGGLGHIALQYAKAMGLNVVAVDISDEKSKLAKDLGADIAINGLKEDPVKAIHDQVGGVHAAISVAVNKKAFEQAYQSVKRGGTLVVVGLPNADLPIPIFDTVLNGVSVKGSIVGTRKDMQEALDFAARGKVRPIVETAELEEINEVFERMEKGKINGRIVLKLKED.

Residues Cys38, His61, Cys92, Cys95, Cys98, Cys106, and Cys148 each coordinate Zn(2+). NAD(+)-binding positions include 172 to 177, Asp195, Lys200, 260 to 262, and Arg331; these read GIGGLG and VGL.

Belongs to the zinc-containing alcohol dehydrogenase family. Zn(2+) is required as a cofactor.

It catalyses the reaction a primary alcohol + NAD(+) = an aldehyde + NADH + H(+). The enzyme catalyses a secondary alcohol + NAD(+) = a ketone + NADH + H(+). The rate-limiting step is NADH release. Catabolite repression. Its function is as follows. Active with primary alcohols, including methanol. The chain is Alcohol dehydrogenase (adh) from Geobacillus stearothermophilus (Bacillus stearothermophilus).